Here is a 334-residue protein sequence, read N- to C-terminus: Serine/Arginine-related protein 53 (334 aa).

Positions methionine 1 to arginine 13 are enriched in basic and acidic residues. Disordered stretches follow at residues methionine 1–proline 179, aspartate 198–alanine 220, and arginine 246–threonine 290. The segment covering serine 14–serine 24 has biased composition (basic residues). A compositionally biased stretch (basic and acidic residues) spans proline 44–tyrosine 62. Basic residues predominate over residues serine 78–serine 118. Basic and acidic residues-rich tracts occupy residues arginine 132–aspartate 166, aspartate 198–aspartate 218, and serine 247–glutamate 256. Residues alanine 180–glutamate 236 adopt a coiled-coil conformation. The span at alanine 265–serine 278 shows a compositional bias: low complexity.

Interacts (via Arg/Ser-rich domain) with LUC7L3, RBM39 and RSF1. Phosphorylated.

The protein localises to the nucleus. It is found in the nucleus speckle. It localises to the cytoplasm. Its function is as follows. Plays a role in pre-mRNA splicing. Involved in both constitutive and alternative pre-mRNA splicing. May have a role in the recognition of the 3' splice site during the second step of splicing. This chain is Serine/Arginine-related protein 53 (Rsrc1), found in Mus musculus (Mouse).